The following is an 84-amino-acid chain: Serine protease inhibitor Kazal-type 2 (84 aa).

An N-terminal signal peptide occupies residues 1-23 (MALSVLRLALLLLAVTFAASLIP). Gln-24 is modified (pyrrolidone carboxylic acid). Residues 30-84 (KYRTPNCSQYRLPGCPRHFNPVCGSDMSTYANECTLCMKIREGGHNIKIIRNGPC) form the Kazal-like domain. 3 disulfide bridges follow: Cys-36–Cys-66, Cys-44–Cys-63, and Cys-52–Cys-84.

Expressed in epididymis (at protein level).

It is found in the secreted. It localises to the cytoplasmic vesicle. The protein resides in the secretory vesicle. The protein localises to the acrosome. Its function is as follows. As a strong inhibitor of acrosin, it is required for normal spermiogenesis. It probably hinders premature activation of proacrosin and other proteases, thus preventing the cascade of events leading to spermiogenesis defects. May be involved in the regulation of serine protease-dependent germ cell apoptosis. It also inhibits trypsin. The polypeptide is Serine protease inhibitor Kazal-type 2 (SPINK2) (Homo sapiens (Human)).